A 303-amino-acid chain; its full sequence is Probable endonuclease 4 (303 aa).

9 residues coordinate Zn(2+): H78, H118, E154, D188, H191, H222, D235, H237, and E267.

This sequence belongs to the AP endonuclease 2 family. Requires Zn(2+) as cofactor.

It carries out the reaction Endonucleolytic cleavage to 5'-phosphooligonucleotide end-products.. Endonuclease IV plays a role in DNA repair. It cleaves phosphodiester bonds at apurinic or apyrimidinic (AP) sites, generating a 3'-hydroxyl group and a 5'-terminal sugar phosphate. This is Probable endonuclease 4 from Mycoplasmoides gallisepticum (strain R(low / passage 15 / clone 2)) (Mycoplasma gallisepticum).